Here is a 153-residue protein sequence, read N- to C-terminus: Movement protein (153 aa).

Disordered stretches follow at residues 1–24 (MAQE…EQDP) and 107–153 (ALSL…RNQR). 2 stretches are compositionally biased toward polar residues: residues 109–122 (SLLS…NQPW) and 140–153 (GQRQ…RNQR).

Belongs to the luteoviruses movement protein family.

The protein resides in the host nucleus envelope. Its function is as follows. Transports viral genome to neighboring plant cells directly through plasmosdesmata, without any budding. The movement protein allows efficient cell to cell propagation, by bypassing the host cell wall barrier. Acts as a suppressor of RNA-mediated gene silencing, also known as post-transcriptional gene silencing (PTGS), a mechanism of plant viral defense that limits the accumulation of viral RNAs. The sequence is that of Movement protein from Avena byzantina (Oat).